Reading from the N-terminus, the 157-residue chain is Cyclic pyranopterin monophosphate synthase (157 aa).

Substrate contacts are provided by residues 74–76 (MCH) and 112–113 (ME). The active site involves Asp-127.

Belongs to the MoaC family. In terms of assembly, homohexamer; trimer of dimers.

It carries out the reaction (8S)-3',8-cyclo-7,8-dihydroguanosine 5'-triphosphate = cyclic pyranopterin phosphate + diphosphate. It functions in the pathway cofactor biosynthesis; molybdopterin biosynthesis. Functionally, catalyzes the conversion of (8S)-3',8-cyclo-7,8-dihydroguanosine 5'-triphosphate to cyclic pyranopterin monophosphate (cPMP). In Campylobacter jejuni subsp. jejuni serotype O:23/36 (strain 81-176), this protein is Cyclic pyranopterin monophosphate synthase.